Consider the following 154-residue polypeptide: Ribosomal RNA large subunit methyltransferase H (154 aa).

S-adenosyl-L-methionine-binding positions include Leu76, Gly103, and 122–127; that span reads LSPLTL.

The protein belongs to the RNA methyltransferase RlmH family. In terms of assembly, homodimer.

The protein resides in the cytoplasm. The enzyme catalyses pseudouridine(1915) in 23S rRNA + S-adenosyl-L-methionine = N(3)-methylpseudouridine(1915) in 23S rRNA + S-adenosyl-L-homocysteine + H(+). Its function is as follows. Specifically methylates the pseudouridine at position 1915 (m3Psi1915) in 23S rRNA. The polypeptide is Ribosomal RNA large subunit methyltransferase H (Wolinella succinogenes (strain ATCC 29543 / DSM 1740 / CCUG 13145 / JCM 31913 / LMG 7466 / NCTC 11488 / FDC 602W) (Vibrio succinogenes)).